We begin with the raw amino-acid sequence, 657 residues long: Zinc finger CCCH domain-containing protein 50 (657 aa).

ANK repeat units follow at residues 68-97 (EARTPLMVAATYGSAGVVSLLVGLGGCVDV) and 104-136 (DGATALHCAASGGSRNAVAVVKLLLAAGADPAT). Residues 176 to 206 (SVASGSSSPPLSSSPDEGNRSPSSRSSSLSP) show a composition bias toward low complexity. Residues 176–222 (SVASGSSSPPLSSSPDEGNRSPSSRSSSLSPITVDRGKKEYPVDPTL) form a disordered region. C3H1-type zinc fingers lie at residues 274 to 302 (PYTAVPCPNFRRPGGCPSGDSCEFSHGVF) and 311 to 333 (YRTRLCKEGAACARRICFFAHDE). Residues 507–566 (YSPRALDPSSLAHSPFGGMSPRSPRTMEPTSPLSARVGAPATQRPSVGSPRNSSAWGTVG) are disordered. Residues 549-562 (QRPSVGSPRNSSAW) show a composition bias toward polar residues.

The chain is Zinc finger CCCH domain-containing protein 50 from Oryza sativa subsp. japonica (Rice).